The primary structure comprises 582 residues: ATP-dependent lipid A-core flippase (582 aa).

Transmembrane regions (helical) follow at residues 16–36 (LWPT…ALIL), 64–84 (LLWM…TSYI), 153–173 (IIGL…ILVV), 253–273 (PIIQ…ASFP), and 275–295 (VMDS…IALM). Residues 28–310 (IVAGIALILN…LTNVNAQFQR (283 aa)) enclose the ABC transmembrane type-1 domain. Residues 342–578 (LEFRNVTFTY…HGVYAQLHKM (237 aa)) enclose the ABC transporter domain. 376 to 383 (GRSGSGKS) contributes to the ATP binding site.

Belongs to the ABC transporter superfamily. Lipid exporter (TC 3.A.1.106) family. As to quaternary structure, homodimer.

It localises to the cell inner membrane. It carries out the reaction ATP + H2O + lipid A-core oligosaccharideSide 1 = ADP + phosphate + lipid A-core oligosaccharideSide 2.. In terms of biological role, involved in lipopolysaccharide (LPS) biosynthesis. Translocates lipid A-core from the inner to the outer leaflet of the inner membrane. Transmembrane domains (TMD) form a pore in the inner membrane and the ATP-binding domain (NBD) is responsible for energy generation. This chain is ATP-dependent lipid A-core flippase, found in Salmonella paratyphi A (strain ATCC 9150 / SARB42).